Consider the following 315-residue polypeptide: Adenine deaminase (315 aa).

Zn(2+) is bound by residues histidine 14, histidine 16, and histidine 194. The active-site Proton donor is the glutamate 197. Aspartate 275 is a binding site for Zn(2+). Aspartate 276 contacts substrate.

The protein belongs to the metallo-dependent hydrolases superfamily. Adenosine and AMP deaminases family. Adenine deaminase type 2 subfamily. The cofactor is Zn(2+).

It catalyses the reaction adenine + H2O + H(+) = hypoxanthine + NH4(+). Functionally, catalyzes the hydrolytic deamination of adenine to hypoxanthine. Plays an important role in the purine salvage pathway and in nitrogen catabolism. In Pseudomonas putida (strain W619), this protein is Adenine deaminase.